A 673-amino-acid chain; its full sequence is Methionine--tRNA ligase (673 aa).

A 'HIGH' region motif is present at residues 13 to 23; the sequence is PYTNGFCHLGH. Residues Cys144, Cys147, Cys156, and Cys160 each contribute to the Zn(2+) site. Residues 325 to 329 carry the 'KMSKS' region motif; the sequence is KFSKS. Lys328 provides a ligand contact to ATP. The tRNA-binding domain maps to 575 to 673; sequence DVAKLDLRVG…KDVPEGTKVH (99 aa).

It belongs to the class-I aminoacyl-tRNA synthetase family. MetG type 1 subfamily. Homodimer. It depends on Zn(2+) as a cofactor.

Its subcellular location is the cytoplasm. The enzyme catalyses tRNA(Met) + L-methionine + ATP = L-methionyl-tRNA(Met) + AMP + diphosphate. In terms of biological role, is required not only for elongation of protein synthesis but also for the initiation of all mRNA translation through initiator tRNA(fMet) aminoacylation. The sequence is that of Methionine--tRNA ligase from Methanocorpusculum labreanum (strain ATCC 43576 / DSM 4855 / Z).